Here is a 201-residue protein sequence, read N- to C-terminus: SDPDPLQDFCVADLDGKAVSVNGHTCKPMSEAGDDFLFSSKLTKAGNTSTPNGSAVTELDVAEWPGTNTLGVSMNRVDFAPGGTNPPHIHPRATEIGMVMKGELLVGILGSLDSGNKLYSRVVRAGETFVIPRGLMHFQFNVGKTEAYMVVSFNSQNPGIVFVPLTLFGSDPPIPTPVLTKALRVEAGVVELLKSKFAGGS.

The cysteines at positions 10 and 26 are disulfide-linked. A Cupin type-1 domain is found at 40–191; the sequence is SKLTKAGNTS…ALRVEAGVVE (152 aa). N-linked (GlcNAc...) asparagine glycosylation is present at Asn47. The oxalate site is built by Asn75 and Asn85. Mn(2+) is bound by residues His88, His90, Glu95, and His137. Oxalate is bound by residues His90 and Glu95.

The protein belongs to the germin family. As to quaternary structure, homo hexamer; a trimer of dimers. Glycosylated. A form called G contains antennary GlcNAc residues, whereas a form called G' lacks antennary GlcNAc residues in its otherwise identical glycans.

The protein localises to the secreted. It localises to the extracellular space. Its subcellular location is the apoplast. The protein resides in the cell wall. It carries out the reaction oxalate + O2 + 2 H(+) = H2O2 + 2 CO2. Its function is as follows. Releases hydrogen peroxide in the apoplast which may be important for cross-linking reactions in the cell wall biochemistry. May play an important role in several aspects of plant growth and defense mechanisms. The polypeptide is Oxalate oxidase 1 (Hordeum vulgare (Barley)).